Reading from the N-terminus, the 294-residue chain is MKKTLLAAGAVLALSSSFTVNAAENDKPQYLSDWWHQSVNVVGSYHTRFGPQIRNDTYLEYEAFAKKDWFDFYGYADAPVFFGGNSDAKGIWNHGSPLFMEIEPRFSIDKLTNTDLSFGPFKEWYFANNYIYDMGRNKDGRQSTWYMGLGTDIDTGLPMSLSMNVYAKYQWQNYGAANENEWDGYRFKIKYFVPITDLWGGQLSYIGFTNFDWGSDLGDDSGNAINGIKTRTNNSIASSHILALNYDHWHYSVVARYWHDGGQWNDDAELNFGNGNFNVRSTGWGGYLVVGYNF.

Residues 1–22 (MKKTLLAAGAVLALSSSFTVNA) form the signal peptide.

Belongs to the nucleoside-specific channel-forming outer membrane porin (Tsx) (TC 1.B.10) family.

It localises to the cell outer membrane. In terms of biological role, functions as a substrate-specific channel for nucleosides and deoxynucleosides. This Escherichia coli O157:H7 protein is Nucleoside-specific channel-forming protein Tsx (tsx).